The primary structure comprises 279 residues: BEN domain-containing protein 6 (279 aa).

A compositionally biased stretch (polar residues) spans 1 to 15; the sequence is MQKIVQTDEITNTQA. Disordered regions lie at residues 1-65 and 134-172; these read MQKI…LAEL and RATN…TDEK. Residues 62–99 adopt a coiled-coil conformation; sequence LAELSKEELCAKIKSLKEKLTNTRKENSRLRQSLVMLQ. The span at 134–148 shows a compositional bias: polar residues; the sequence is RATNNSSPDSFASTC. Over residues 162–172 the composition is skewed to basic and acidic residues; sequence KPEEEHQTDEK. The 101-residue stretch at 171-271 folds into the BEN domain; sequence EKQFQIEKWQ…NCTKKPNLSK (101 aa).

In terms of assembly, interacts (via BEN domain) with RBPJ.

It localises to the nucleus. Acts as a corepressor of recombining binding protein suppressor hairless (RBPJ) and inhibits Notch signaling in neural stem cells, thereby opposing their self-renewal and promoting neurogenesis. The sequence is that of BEN domain-containing protein 6 (BEND6) from Homo sapiens (Human).